The sequence spans 163 residues: Shikimate kinase (163 aa).

Residue 10-15 (GVGKTT) coordinates ATP. T14 lines the Mg(2+) pocket. Residues D28, R52, and G75 each contribute to the substrate site. Residue R116 participates in ATP binding. R134 contacts substrate.

It belongs to the shikimate kinase family. In terms of assembly, monomer. The cofactor is Mg(2+).

The protein resides in the cytoplasm. The catalysed reaction is shikimate + ATP = 3-phosphoshikimate + ADP + H(+). Its pathway is metabolic intermediate biosynthesis; chorismate biosynthesis; chorismate from D-erythrose 4-phosphate and phosphoenolpyruvate: step 5/7. Its function is as follows. Catalyzes the specific phosphorylation of the 3-hydroxyl group of shikimic acid using ATP as a cosubstrate. In Streptococcus suis (strain 98HAH33), this protein is Shikimate kinase.